The sequence spans 465 residues: MAIVNGAVGKPQHISDMVDSTKMNGNQSQDTAGRADTPVSNGGQDYLHVFDSRTCNIHHIPVSDGFVRGSDLSTIAAPLKGSSGRMQKLAVLDPGFQHTACKESSITFIDGEKGELRYRGVRIEDLFHDHDFDSTLHLLVWGRLPTKEEKIKFERRMFEVASPPQEVCDVIRKLPKNMDFISMFLTGLSTYMGTDEEMTRSRHQAVMTYHKNLQTTDDAIIRCFSYVSATLATVYCHVKGVELHHPQEGLTLVENFLHMIGMEDPDKKISRTIDRLSINMADHELSCSTAAFLHVASSLTDPMTCLLTAISAASGPLHGGALEVCYQGLELIGSVDNVPAYIAAVKAKKFRLFGYGHRVYKIQDPRAALTKELMEEHREAIDANPLLQIAVEIDRQANTDPYFVERKLKLNADFYGCFIYIALGIPRDMIPGLLTISRMGGLMAHWREAMNNPIKIWRPMQKFKL.

The interval 13-40 (HISDMVDSTKMNGNQSQDTAGRADTPVS) is disordered. The span at 21 to 31 (TKMNGNQSQDT) shows a compositional bias: polar residues. Catalysis depends on residues H357 and D413.

Belongs to the citrate synthase family.

Its pathway is secondary metabolite biosynthesis. In terms of biological role, citrate synthase-like protein; part of the gene cluster that mediates the biosynthesis of squalestatin S1 (SQS1, also known as zaragozic acid A), a heavily oxidized fungal polyketide that offers potent cholesterol lowering activity by targeting squalene synthase (SS). SQS1 is composed of a 2,8-dioxobicyclic[3.2.1]octane-3,4,5-tricarboxyclic acid core that is connected to two lipophilic polyketide arms. These initial steps feature the priming of an unusual benzoic acid starter unit onto the highly reducing polyketide synthase pks2, followed by oxaloacetate extension and product release to generate a tricarboxylic acid containing product. The phenylalanine ammonia lyase (PAL) M7 and the acyl-CoA ligase M9 are involved in transforming phenylalanine into benzoyl-CoA. The citrate synthase-like protein R3 is involved in connecting the C-alpha-carbons of the hexaketide chain and oxaloacetate to afford the tricarboxylic acid unit. The potential hydrolytic enzymes, M8 and M10, are in close proximity to pks2 and may participate in product release. On the other side, the tetraketide arm is synthesized by a the squalestatin tetraketide synthase pks1 and enzymatically esterified to the core in the last biosynthetic step, by the acetyltransferase M4. The biosynthesis of the tetraketide must involve 3 rounds of chain extension. After the first and second rounds methyl-transfer occurs, and in all rounds of extension the ketoreductase and dehydratase are active. The enoyl reductase and C-MeT of pks1 are not active in the final round of extension. The acetyltransferase M4 appears to have a broad substrate selectivity for its acyl CoA substrate, allowing the in vitro synthesis of novel squalestatins. The biosynthesis of SQS1 requires several oxidative steps likely performed by oxidoreductases M1, R1 and R2. Finally, in support of the identification of the cluster as being responsible for SQS1 production, the cluster contains a gene encoding a putative squalene synthase (SS) R6, suggesting a likely mechanism for self-resistance. The sequence is that of Citrate synthase-like protein from Phoma sp. (strain ATCC 20986 / MF5453).